Consider the following 348-residue polypeptide: Ferredoxin--NADP reductase (348 aa).

Residues Thr-25, Glu-44, Gln-52, Tyr-57, Val-97, Phe-132, Asp-298, and Ser-339 each contribute to the FAD site.

It belongs to the ferredoxin--NADP reductase type 2 family. In terms of assembly, homodimer. The cofactor is FAD.

The enzyme catalyses 2 reduced [2Fe-2S]-[ferredoxin] + NADP(+) + H(+) = 2 oxidized [2Fe-2S]-[ferredoxin] + NADPH. The polypeptide is Ferredoxin--NADP reductase (Chlorobium phaeobacteroides (strain BS1)).